We begin with the raw amino-acid sequence, 204 residues long: Glycerol-3-phosphate acyltransferase (204 aa).

5 consecutive transmembrane segments (helical) span residues 8 to 28 (ILIF…CYIF), 53 to 73 (VPAA…VVIA), 81 to 101 (FITA…IFFG), 116 to 136 (FGFS…VAII), and 155 to 175 (VIFT…IIIL).

The protein belongs to the PlsY family. As to quaternary structure, probably interacts with PlsX.

The protein resides in the cell inner membrane. It catalyses the reaction an acyl phosphate + sn-glycerol 3-phosphate = a 1-acyl-sn-glycero-3-phosphate + phosphate. The protein operates within lipid metabolism; phospholipid metabolism. Functionally, catalyzes the transfer of an acyl group from acyl-phosphate (acyl-PO(4)) to glycerol-3-phosphate (G3P) to form lysophosphatidic acid (LPA). This enzyme utilizes acyl-phosphate as fatty acyl donor, but not acyl-CoA or acyl-ACP. This Francisella tularensis subsp. holarctica (strain FTNF002-00 / FTA) protein is Glycerol-3-phosphate acyltransferase.